The chain runs to 253 residues: MKSESESHAQSQIDSLMAVIPAAGSGSRMQANIPKQFLMVANRTLLEYSIEAVLKDARVEQVFVAVSDSNAEYLIELKKSLPTKVHFVTGGNSRAESVLAGVKVAVSQGATHVLVHDAARPCLPKKALTAVINTGLKDPQGAILAIPVRDSLKRAVISVNDETGVTHIESSVDREALWQAQTPQVFNAERLQQAIEHMGALNPQLTDEASAMQWCGFQPALIPGSIRNLKVTHPEDFECVRDWLLADNNDHKN.

Belongs to the IspD/TarI cytidylyltransferase family. IspD subfamily.

It carries out the reaction 2-C-methyl-D-erythritol 4-phosphate + CTP + H(+) = 4-CDP-2-C-methyl-D-erythritol + diphosphate. Its pathway is isoprenoid biosynthesis; isopentenyl diphosphate biosynthesis via DXP pathway; isopentenyl diphosphate from 1-deoxy-D-xylulose 5-phosphate: step 2/6. Its function is as follows. Catalyzes the formation of 4-diphosphocytidyl-2-C-methyl-D-erythritol from CTP and 2-C-methyl-D-erythritol 4-phosphate (MEP). The chain is 2-C-methyl-D-erythritol 4-phosphate cytidylyltransferase from Idiomarina loihiensis (strain ATCC BAA-735 / DSM 15497 / L2-TR).